Reading from the N-terminus, the 1392-residue chain is DNA-directed RNA polymerase subunit beta'' (1392 aa).

Cys-224, Cys-295, Cys-302, and Cys-305 together coordinate Zn(2+).

This sequence belongs to the RNA polymerase beta' chain family. RpoC2 subfamily. In plastids the minimal PEP RNA polymerase catalytic core is composed of four subunits: alpha, beta, beta', and beta''. When a (nuclear-encoded) sigma factor is associated with the core the holoenzyme is formed, which can initiate transcription. The cofactor is Zn(2+).

The protein resides in the plastid. It is found in the chloroplast. The catalysed reaction is RNA(n) + a ribonucleoside 5'-triphosphate = RNA(n+1) + diphosphate. Functionally, DNA-dependent RNA polymerase catalyzes the transcription of DNA into RNA using the four ribonucleoside triphosphates as substrates. In Eucalyptus globulus subsp. globulus (Tasmanian blue gum), this protein is DNA-directed RNA polymerase subunit beta''.